The following is a 381-amino-acid chain: Queuine tRNA-ribosyltransferase (381 aa).

Asp92 (proton acceptor) is an active-site residue. Substrate contacts are provided by residues 92–96 (DSGGF), Asp146, Gln190, and Gly217. The tract at residues 248–254 (GVGRPED) is RNA binding. The active-site Nucleophile is the Asp267. Residues 272–276 (TRNAR) are RNA binding; important for wobble base 34 recognition. The Zn(2+) site is built by Cys305, Cys307, Cys310, and His337.

It belongs to the queuine tRNA-ribosyltransferase family. As to quaternary structure, homodimer. Within each dimer, one monomer is responsible for RNA recognition and catalysis, while the other monomer binds to the replacement base PreQ1. Requires Zn(2+) as cofactor.

The catalysed reaction is 7-aminomethyl-7-carbaguanine + guanosine(34) in tRNA = 7-aminomethyl-7-carbaguanosine(34) in tRNA + guanine. Its pathway is tRNA modification; tRNA-queuosine biosynthesis. In terms of biological role, catalyzes the base-exchange of a guanine (G) residue with the queuine precursor 7-aminomethyl-7-deazaguanine (PreQ1) at position 34 (anticodon wobble position) in tRNAs with GU(N) anticodons (tRNA-Asp, -Asn, -His and -Tyr). Catalysis occurs through a double-displacement mechanism. The nucleophile active site attacks the C1' of nucleotide 34 to detach the guanine base from the RNA, forming a covalent enzyme-RNA intermediate. The proton acceptor active site deprotonates the incoming PreQ1, allowing a nucleophilic attack on the C1' of the ribose to form the product. After dissociation, two additional enzymatic reactions on the tRNA convert PreQ1 to queuine (Q), resulting in the hypermodified nucleoside queuosine (7-(((4,5-cis-dihydroxy-2-cyclopenten-1-yl)amino)methyl)-7-deazaguanosine). This Xanthomonas euvesicatoria pv. vesicatoria (strain 85-10) (Xanthomonas campestris pv. vesicatoria) protein is Queuine tRNA-ribosyltransferase.